An 863-amino-acid chain; its full sequence is Alanine--tRNA ligase (863 aa).

Residues His-552, His-556, Cys-654, and His-658 each coordinate Zn(2+).

It belongs to the class-II aminoacyl-tRNA synthetase family. Requires Zn(2+) as cofactor.

The protein localises to the cytoplasm. It carries out the reaction tRNA(Ala) + L-alanine + ATP = L-alanyl-tRNA(Ala) + AMP + diphosphate. Catalyzes the attachment of alanine to tRNA(Ala) in a two-step reaction: alanine is first activated by ATP to form Ala-AMP and then transferred to the acceptor end of tRNA(Ala). Also edits incorrectly charged Ser-tRNA(Ala) and Gly-tRNA(Ala) via its editing domain. This Halorhodospira halophila (strain DSM 244 / SL1) (Ectothiorhodospira halophila (strain DSM 244 / SL1)) protein is Alanine--tRNA ligase.